Consider the following 254-residue polypeptide: Triosephosphate isomerase (254 aa).

10–12 (NWK) is a substrate binding site. Residue H99 is the Electrophile of the active site. Residue E169 is the Proton acceptor of the active site. Residues G175, S215, and 236–237 (GG) contribute to the substrate site.

It belongs to the triosephosphate isomerase family. Homodimer.

The protein resides in the cytoplasm. It carries out the reaction D-glyceraldehyde 3-phosphate = dihydroxyacetone phosphate. It participates in carbohydrate biosynthesis; gluconeogenesis. It functions in the pathway carbohydrate degradation; glycolysis; D-glyceraldehyde 3-phosphate from glycerone phosphate: step 1/1. Its function is as follows. Involved in the gluconeogenesis. Catalyzes stereospecifically the conversion of dihydroxyacetone phosphate (DHAP) to D-glyceraldehyde-3-phosphate (G3P). The protein is Triosephosphate isomerase of Chlamydia caviae (strain ATCC VR-813 / DSM 19441 / 03DC25 / GPIC) (Chlamydophila caviae).